The chain runs to 291 residues: MFKGSCVALITPFTEDGVNYEELRKLLEWHIKNHTDAILVCGTTGEGSTMTLEEKKEVIKFSVEVVNKRVPVIAGTGTNNTKASIELSKYAEEVGADMVLIITPYYNKTSQKGLYAHFSAINDAINIPIMLYNVPSRTGMNITPLMLDKLANLNNVVAIKEASGDLSQVAKMAELCGDRIAIYSGNDDQIVPILSLGGAGVVSVLANILPEETHNICEKYFLGEVIESRNLQLKYLSLANSLFIETNPIPVKTAMNLMNFNCGPLRLPLCEMEDSNLVILEENLKANGLIK.

Residue threonine 44 coordinates pyruvate. Catalysis depends on tyrosine 132, which acts as the Proton donor/acceptor. Lysine 160 serves as the catalytic Schiff-base intermediate with substrate. Valine 202 contributes to the pyruvate binding site.

This sequence belongs to the DapA family. As to quaternary structure, homotetramer; dimer of dimers.

Its subcellular location is the cytoplasm. It catalyses the reaction L-aspartate 4-semialdehyde + pyruvate = (2S,4S)-4-hydroxy-2,3,4,5-tetrahydrodipicolinate + H2O + H(+). Its pathway is amino-acid biosynthesis; L-lysine biosynthesis via DAP pathway; (S)-tetrahydrodipicolinate from L-aspartate: step 3/4. In terms of biological role, catalyzes the condensation of (S)-aspartate-beta-semialdehyde [(S)-ASA] and pyruvate to 4-hydroxy-tetrahydrodipicolinate (HTPA). In Clostridium perfringens (strain SM101 / Type A), this protein is 4-hydroxy-tetrahydrodipicolinate synthase.